Reading from the N-terminus, the 93-residue chain is Small ribosomal subunit protein uS19 (93 aa).

The protein belongs to the universal ribosomal protein uS19 family.

In terms of biological role, protein S19 forms a complex with S13 that binds strongly to the 16S ribosomal RNA. The protein is Small ribosomal subunit protein uS19 of Clostridium acetobutylicum (strain ATCC 824 / DSM 792 / JCM 1419 / IAM 19013 / LMG 5710 / NBRC 13948 / NRRL B-527 / VKM B-1787 / 2291 / W).